Reading from the N-terminus, the 708-residue chain is C-Jun-amino-terminal kinase-interacting protein 1 (708 aa).

The disordered stretch occupies residues 1-26; it reads MAERESGLSGGAASPPAASPFLGLHI. A compositionally biased stretch (low complexity) spans 11-24; that stretch reads GAASPPAASPFLGL. 3 positions are modified to phosphoserine: Ser14, Ser28, and Ser39. The disordered stretch occupies residues 69–368; the sequence is PPRAGLLSAG…PPRASLSSDT (300 aa). Residues 71–87 show a composition bias toward low complexity; the sequence is RAGLLSAGSSGSAGSRL. Phosphothreonine; by MAPK8, MAPK9 and MAPK10 is present on Thr103. Positions 105-116 are enriched in acidic residues; sequence GAEDDEEDDDEL. The tract at residues 126–282 is JNK-binding domain (JBD); sequence SKAESGQEPA…EATEEIYLTP (157 aa). Position 149 is a phosphoserine (Ser149). The tract at residues 154–173 is minimal inhibitory domain (MID); sequence RPKRPTTLNLFPQVPRSQDT. Polar residues predominate over residues 159–179; sequence TTLNLFPQVPRSQDTLNNNSL. Phosphoserine is present on residues Ser178, Ser184, Ser190, Ser192, and Ser193. The span at 191–201 shows a compositional bias: polar residues; the sequence is RSSSPLKTGEQ. Thr202 is subject to Phosphothreonine; by MAPK8, MAPK9 and MAPK10. Residue Ser211 is modified to Phosphoserine. A compositionally biased stretch (polar residues) spans 220 to 232; sequence PVPTQDRGTSTDS. Basic and acidic residues predominate over residues 264–274; that stretch reads IHYQADVRLEA. Residues 280–468 are interaction with MAP3K7; that stretch reads LTPVQRPPDP…NVFMSGRSRS (189 aa). Residues 292–308 are compositionally biased toward polar residues; the sequence is PTSTFLPPTESRMSVSS. Ser308, Ser325, Ser327, Ser337, Ser352, Ser363, Ser366, Ser404, and Ser406 each carry phosphoserine. Short sequence motifs (D-box) lie at residues 350–357 and 361–369; these read RGSLGEPP and RASLSSDTS. Thr408 carries the phosphothreonine modification. A disordered region spans residues 426–448; the sequence is EEYEEAPQPRPPTCLSEDSTPDE. Phosphoserine is present on residues Ser441 and Ser444. At Thr445 the chain carries Phosphothreonine. A phosphoserine mark is found at Ser466, Ser468, Ser469, and Ser470. Positions 468–657 are interaction with VRK2; it reads SSSAESFGLF…PKNNKYFGFI (190 aa). The region spanning 485-546 is the SH3 domain; that stretch reads EHEQTHRAIF…PAYYAIEVTK (62 aa). The PID domain maps to 558–697; sequence SDWIDQFRVK…FQQFYKQFVE (140 aa).

Belongs to the JIP scaffold family. As to quaternary structure, forms homo- or heterooligomeric complexes. Binds specific components of the JNK signaling pathway namely MAPK8/JNK1, MAPK9/JNK2, MAPK10/JNK3, MAP2K7/MKK7, MAP3K11/MLK3 and DLK1. Also binds the proline-rich domain-containing splice variant of apolipoprotein E receptor 2 (ApoER2). Interacts, via the PID domain, with ARHGEF28. Binds the cytoplasmic tails of LRP1 and LRP2 (Megalin). Binds the TPR motif-containing C-terminal of kinesin light chain, KLC1. Pre-assembled MAPK8IP1 scaffolding complexes are then transported as a cargo of kinesin, to the required subcellular location. Interacts with the cytoplasmic domain of APP. Interacts with DCLK2, VRK2 and MAP3K7/TAK1. Found in a complex with SH3RF1, RAC1, MAP3K11/MLK3, MAP2K7/MKK7 and MAPK8/JNK1. Found in a complex with SH3RF1, RAC2, MAP3K7/TAK1, MAP2K7/MKK7, MAPK8/JNK1 and MAPK9/JNK2. Interacts with SH3RF2. In terms of processing, phosphorylated by MAPK8, MAPK9 and MAPK10. Phosphorylation on Thr-103 is also necessary for the dissociation and activation of MAP3K12. Phosphorylated by VRK2. Hyperphosphorylated during mitosis following activation of stress-activated and MAP kinases. Ubiquitinated. Two preliminary events are required to prime for ubiquitination; phosphorylation and an increased in intracellular calcium concentration. Then, the calcium influx initiates ubiquitination and degradation by the ubiquitin-proteasome pathway. Highly expressed in brain and pancreatic beta-cells. Weaker expression found in kidney.

It is found in the cytoplasm. Its subcellular location is the perinuclear region. The protein localises to the nucleus. The protein resides in the endoplasmic reticulum membrane. It localises to the mitochondrion membrane. The JNK-interacting protein (JIP) group of scaffold proteins selectively mediates JNK signaling by aggregating specific components of the MAPK cascade to form a functional JNK signaling module. Required for JNK activation in response to excitotoxic stress. Cytoplasmic MAPK8IP1 causes inhibition of JNK-regulated activity by retaining JNK in the cytoplasm and thus inhibiting the JNK phosphorylation of c-Jun. May also participate in ApoER2-specific reelin signaling. Directly, or indirectly, regulates GLUT2 gene expression and beta-cell function. Appears to have a role in cell signaling in mature and developing nerve terminals. May function as a regulator of vesicle transport, through interactions with the JNK-signaling components and motor proteins. Functions as an anti-apoptotic protein and whose level seems to influence the beta-cell death or survival response. Acts as a scaffold protein that coordinates with SH3RF1 in organizing different components of the JNK pathway, including RAC1 or RAC2, MAP3K11/MLK3 or MAP3K7/TAK1, MAP2K7/MKK7, MAPK8/JNK1 and/or MAPK9/JNK2 into a functional multiprotein complex to ensure the effective activation of the JNK signaling pathway. Regulates the activation of MAPK8/JNK1 and differentiation of CD8(+) T-cells. This is C-Jun-amino-terminal kinase-interacting protein 1 (Mapk8ip1) from Rattus norvegicus (Rat).